A 278-amino-acid polypeptide reads, in one-letter code: Nudix hydrolase 2 (278 aa).

The 133-residue stretch at 110–242 folds into the Nudix hydrolase domain; sequence SHRVGIGAFV…ELLRYMTDIC (133 aa). A Nudix box motif is present at residues 147–168; sequence GVVNEGEDIHDGSVREVKEETG. A Mg(2+)-binding site is contributed by Glu-162. Glu-165 serves as the catalytic Proton acceptor. Residue Glu-166 participates in Mg(2+) binding.

It belongs to the Nudix hydrolase family. It depends on Mg(2+) as a cofactor. Mn(2+) is required as a cofactor. As to expression, expressed in roots, stems and leaves.

The catalysed reaction is ADP-D-ribose + H2O = D-ribose 5-phosphate + AMP + 2 H(+). The enzyme catalyses NAD(+) + H2O = beta-nicotinamide D-ribonucleotide + AMP + 2 H(+). It carries out the reaction NADH + H2O = reduced beta-nicotinamide D-ribonucleotide + AMP + 2 H(+). Probably mediates the hydrolysis of some nucleoside diphosphate derivatives. In vitro, it can use both NADH and ADP-ribose as substrates; however the relevance of such substrates in vivo is unclear. Confers tolerance to oxidative stress. The protein is Nudix hydrolase 2 of Arabidopsis thaliana (Mouse-ear cress).